The primary structure comprises 235 residues: Alpha-S2-casein (235 aa).

The N-terminal stretch at 1–15 is a signal peptide; the sequence is MKFFIFTCLLAVAFA. 12 positions are modified to phosphoserine: serine 23, serine 24, serine 25, serine 28, serine 47, serine 72, serine 73, serine 74, serine 77, serine 147, serine 149, and serine 168. Positions 144-158 are enriched in polar residues; that stretch reads EELSTSEEPVSSSQE. Residues 144-163 form a disordered region; it reads EELSTSEEPVSSSQEENTKT.

The protein belongs to the alpha-casein family. Mammary gland specific. Secreted in milk.

It is found in the secreted. In terms of biological role, important role in the capacity of milk to transport calcium phosphate. The polypeptide is Alpha-S2-casein (CSN1S2) (Sus scrofa (Pig)).